The sequence spans 206 residues: tRNA(Phe) 7-((3-amino-3-carboxypropyl)-4-demethylwyosine(37)-N(4))-methyltransferase 2 (206 aa).

Belongs to the TYW3 family.

The enzyme catalyses 4-demethyl-7-[(3S)-3-amino-3-carboxypropyl]wyosine(37) in tRNA(Phe) + S-adenosyl-L-methionine = 7-[(3S)-3-amino-3-carboxypropyl]wyosine(37) in tRNA(Phe) + S-adenosyl-L-homocysteine + H(+). Its function is as follows. S-adenosyl-L-methionine-dependent methyltransferase that acts as a component of the wyosine derivatives biosynthesis pathway. Probably methylates N-4 position of wybutosine-86 to produce wybutosine-72. This is tRNA(Phe) 7-((3-amino-3-carboxypropyl)-4-demethylwyosine(37)-N(4))-methyltransferase 2 from Pyrococcus horikoshii (strain ATCC 700860 / DSM 12428 / JCM 9974 / NBRC 100139 / OT-3).